The primary structure comprises 45 residues: Large ribosomal subunit protein bL34 (45 aa).

Residues 1–24 (MTKRTFGGTSRKRKRVSGFRVRMR) form a disordered region. Residues 10 to 24 (SRKRKRVSGFRVRMR) are compositionally biased toward basic residues.

Belongs to the bacterial ribosomal protein bL34 family.

The chain is Large ribosomal subunit protein bL34 from Prochlorococcus marinus (strain MIT 9303).